We begin with the raw amino-acid sequence, 694 residues long: Proprotein convertase subtilisin/kexin type 9 (694 aa).

Positions 1 to 34 (MGTHCSAWLRWPLLPLLPPLLLLLLLLCPTGAGA) are cleaved as a signal peptide. The propeptide occupies 35–155 (QDEDGDYEEL…IEEDSFVFAQ (121 aa)). Tyrosine 41 is subject to Sulfotyrosine. Residue serine 50 is modified to Phosphoserine. Residues 158–470 (PWNLERIIPA…RTVWSAHSGP (313 aa)) form the Peptidase S8 domain. Residues aspartate 189 and histidine 229 each act as charge relay system in the active site. Intrachain disulfides connect cysteine 226–cysteine 258 and cysteine 326–cysteine 361. The active-site Charge relay system is the serine 389. A C-terminal domain region spans residues 453 to 694 (ETGGQLLCRT…RPSAKASWVQ (242 aa)). Cystine bridges form between cysteine 460-cysteine 530, cysteine 480-cysteine 529, and cysteine 489-cysteine 512. The Cell attachment site signature appears at 499 to 501 (RGD). N-linked (GlcNAc...) asparagine glycosylation occurs at asparagine 536. Intrachain disulfides connect cysteine 537/cysteine 604, cysteine 555/cysteine 603, cysteine 565/cysteine 591, cysteine 611/cysteine 682, cysteine 629/cysteine 681, and cysteine 638/cysteine 657. A Phosphoserine modification is found at serine 691.

Belongs to the peptidase S8 family. In terms of assembly, monomer. Can self-associate to form dimers and higher multimers which may have increased LDLR degrading activity. The precursor protein but not the mature protein may form multimers. Interacts with APOB, VLDLR, LRP8/APOER2 and BACE1. The full-length immature form (pro-PCSK9) interacts with SCNN1A, SCNN1B and SCNN1G. The pro-PCSK9 form (via C-terminal domain) interacts with LDLR. Interacts (via the C-terminal domain) with ANXA2 (via repeat Annexin 1); the interaction inhibits the degradation of LDLR. The cofactor is Ca(2+). In terms of processing, cleavage by furin and PCSK5 generates a truncated inactive protein that is unable to induce LDLR degradation. Undergoes autocatalytic cleavage in the endoplasmic reticulum to release the propeptide from the N-terminus and the cleavage of the propeptide is strictly required for its maturation and activation. The cleaved propeptide however remains associated with the catalytic domain through non-covalent interactions, preventing potential substrates from accessing its active site. As a result, it is secreted from cells as a propeptide-containing, enzymatically inactive protein. Post-translationally, phosphorylation protects the propeptide against proteolysis. Hepatocytes, kidney mesenchymal cells, intestinal ileum, colon epithelia and embryonic brain telencephalon neurons.

It localises to the cytoplasm. It is found in the secreted. Its subcellular location is the endosome. The protein resides in the lysosome. The protein localises to the cell surface. It localises to the endoplasmic reticulum. It is found in the golgi apparatus. With respect to regulation, its proteolytic activity is autoinhibited by the non-covalent binding of the propeptide to the catalytic domain. Inhibited by EGTA. Functionally, crucial player in the regulation of plasma cholesterol homeostasis. Binds to low-density lipid receptor family members: low density lipoprotein receptor (LDLR), very low density lipoprotein receptor (VLDLR), apolipoprotein E receptor (LRP1/APOER) and apolipoprotein receptor 2 (LRP8/APOER2), and promotes their degradation in intracellular acidic compartments. Acts via a non-proteolytic mechanism to enhance the degradation of the hepatic LDLR through a clathrin LDLRAP1/ARH-mediated pathway. May prevent the recycling of LDLR from endosomes to the cell surface or direct it to lysosomes for degradation. Can induce ubiquitination of LDLR leading to its subsequent degradation. Inhibits intracellular degradation of APOB via the autophagosome/lysosome pathway in a LDLR-independent manner. Involved in the disposal of non-acetylated intermediates of BACE1 in the early secretory pathway. Inhibits epithelial Na(+) channel (ENaC)-mediated Na(+) absorption by reducing ENaC surface expression primarily by increasing its proteasomal degradation. Regulates neuronal apoptosis via modulation of LRP8/APOER2 levels and related anti-apoptotic signaling pathways. The polypeptide is Proprotein convertase subtilisin/kexin type 9 (Pcsk9) (Mus musculus (Mouse)).